We begin with the raw amino-acid sequence, 152 residues long: Nucleoside diphosphate kinase (152 aa).

Residues K11, F59, R87, T93, R104, and N114 each coordinate ATP. The active-site Pros-phosphohistidine intermediate is the H117.

The protein belongs to the NDK family. Homotetramer. Mg(2+) serves as cofactor.

Its subcellular location is the cytoplasm. It carries out the reaction a 2'-deoxyribonucleoside 5'-diphosphate + ATP = a 2'-deoxyribonucleoside 5'-triphosphate + ADP. It catalyses the reaction a ribonucleoside 5'-diphosphate + ATP = a ribonucleoside 5'-triphosphate + ADP. Its function is as follows. Major role in the synthesis of nucleoside triphosphates other than ATP. The ATP gamma phosphate is transferred to the NDP beta phosphate via a ping-pong mechanism, using a phosphorylated active-site intermediate. This Prochlorococcus marinus (strain AS9601) protein is Nucleoside diphosphate kinase.